The primary structure comprises 207 residues: Ras-related protein Rab-8B (207 aa).

Residues Ser17, Gly18, Val19, Gly20, Lys21, Thr22, Cys23, Thr35, Ser39, and Thr40 each coordinate GTP. Thr22 is a binding site for Mg(2+). 2 short sequence motifs (switch) span residues 31–45 (DAFNTTFISTIGIDF) and 63–80 (DTAGQERFRTITTAYYRG). Thr40 and Asp63 together coordinate Mg(2+). Position 66 (Gly66) interacts with GTP. The residue at position 72 (Thr72) is a Phosphothreonine. The GTP site is built by Asn121, Lys122, Asp124, Ala152, and Lys153. Position 180 is a phosphoserine (Ser180). A Cysteine methyl ester modification is found at Cys204. Cys204 carries S-geranylgeranyl cysteine lipidation. A propeptide spans 205–207 (LLL) (removed in mature form).

Belongs to the small GTPase superfamily. Rab family. In terms of assembly, associated with actin, delta-catenin and alpha and beta tubulins. Interacts with OTOF. Interacts with PEX5R. Interacts with RAB3IP. Interacts with VIM. Interacts with CDH1. Interacts with MICALL2. Interacts with GDI1, GDI2, CHML and CHM; phosphorylation at Thr-72 disrupts these interactions. Interacts with MICAL1. The cofactor is Mg(2+). Phosphorylation of Thr-72 in the switch II region by LRRK2 prevents the association of RAB regulatory proteins, including CHM, CHML and RAB GDP dissociation inhibitors GDI1 and GDI2.

It is found in the cell membrane. The protein resides in the cytoplasmic vesicle. It localises to the phagosome membrane. Its subcellular location is the endosome membrane. The catalysed reaction is GTP + H2O = GDP + phosphate + H(+). Its activity is regulated as follows. Regulated by guanine nucleotide exchange factors (GEFs) including RAB3IP/RABIN8 which promotes the exchange of bound GDP for free GTP. Regulated by GTPase activating proteins (GAPs) which increase the GTP hydrolysis activity. Inhibited by GDP dissociation inhibitors (GDIs). Functionally, the small GTPases Rab are key regulators of intracellular membrane trafficking, from the formation of transport vesicles to their fusion with membranes. Rabs cycle between an inactive GDP-bound form and an active GTP-bound form that is able to recruit to membranes different sets of downstream effectors directly responsible for vesicle formation, movement, tethering and fusion. RAB8B may be involved in polarized vesicular trafficking and neurotransmitter release. May participate in cell junction dynamics in Sertoli cells. May also participate in the export of a subset of neosynthesized proteins through a Rab8-Rab10-Rab11-dependent endososomal export route. The polypeptide is Ras-related protein Rab-8B (RAB8B) (Pongo abelii (Sumatran orangutan)).